A 223-amino-acid chain; its full sequence is Probable transaldolase (223 aa).

The Schiff-base intermediate with substrate role is filled by Lys86.

It belongs to the transaldolase family. Type 3B subfamily.

It is found in the cytoplasm. It catalyses the reaction D-sedoheptulose 7-phosphate + D-glyceraldehyde 3-phosphate = D-erythrose 4-phosphate + beta-D-fructose 6-phosphate. Its pathway is carbohydrate degradation; pentose phosphate pathway; D-glyceraldehyde 3-phosphate and beta-D-fructose 6-phosphate from D-ribose 5-phosphate and D-xylulose 5-phosphate (non-oxidative stage): step 2/3. In terms of biological role, transaldolase is important for the balance of metabolites in the pentose-phosphate pathway. This chain is Probable transaldolase (tal), found in Thermoplasma volcanium (strain ATCC 51530 / DSM 4299 / JCM 9571 / NBRC 15438 / GSS1).